A 208-amino-acid chain; its full sequence is MEVNVLNIKGEDTGRKVTLNESIFGIEPNDHAIYLDVKQFMANQRQGTHKSKERSEISGSTRKLGRQKGGGGARRGDINSPVLVGGARVFGPKPRDYWFKLNKKVKTLARKSALSYKAQENAIIIVEDFTFEAPKTKDFVSMVNNLKIADKKLLLVLPEANKNVYLSARNIERANVAIASALNTYNVLNAETLVVTENSLKAIENILS.

A disordered region spans residues Gln44–Asn79.

This sequence belongs to the universal ribosomal protein uL4 family. In terms of assembly, part of the 50S ribosomal subunit.

One of the primary rRNA binding proteins, this protein initially binds near the 5'-end of the 23S rRNA. It is important during the early stages of 50S assembly. It makes multiple contacts with different domains of the 23S rRNA in the assembled 50S subunit and ribosome. Its function is as follows. Forms part of the polypeptide exit tunnel. This chain is Large ribosomal subunit protein uL4, found in Phocaeicola vulgatus (strain ATCC 8482 / DSM 1447 / JCM 5826 / CCUG 4940 / NBRC 14291 / NCTC 11154) (Bacteroides vulgatus).